Consider the following 505-residue polypeptide: ATP synthase subunit alpha (505 aa).

170-177 provides a ligand contact to ATP; sequence GDRQTGKT.

Belongs to the ATPase alpha/beta chains family. F-type ATPases have 2 components, CF(1) - the catalytic core - and CF(0) - the membrane proton channel. CF(1) has five subunits: alpha(3), beta(3), gamma(1), delta(1), epsilon(1). CF(0) has four main subunits: a(1), b(1), b'(1) and c(9-12).

Its subcellular location is the cellular thylakoid membrane. The catalysed reaction is ATP + H2O + 4 H(+)(in) = ADP + phosphate + 5 H(+)(out). Functionally, produces ATP from ADP in the presence of a proton gradient across the membrane. The alpha chain is a regulatory subunit. This Synechococcus sp. (strain ATCC 27144 / PCC 6301 / SAUG 1402/1) (Anacystis nidulans) protein is ATP synthase subunit alpha.